The following is a 512-amino-acid chain: Sucrose transport protein SUC5 (512 aa).

A disordered region spans residues 1 to 27 (MGALEAERAANNATALETQSSPEDLGQ). At 1–33 (MGALEAERAANNATALETQSSPEDLGQPSPLRK) the chain is on the cytoplasmic side. Residues 11 to 22 (NNATALETQSSP) show a composition bias toward polar residues. Position 20 is a phosphoserine (S20). The chain crosses the membrane as a helical span at residues 34 to 54 (IISVASIAAGVQFGWALQLSL). The Extracellular segment spans residues 55-67 (LTPYIQLLGIPHK). The chain crosses the membrane as a helical span at residues 68-88 (WSSYMWLCGPISGMIVQPIVG). The Cytoplasmic segment spans residues 89–102 (YHSDRCESRFGRRR). The helical transmembrane segment at 103–123 (PFIAAGVALVAVSVFLIGFAA) threads the bilayer. Residues 124–140 (DMGHSFGDKLENKVRTR) are Extracellular-facing. A helical transmembrane segment spans residues 141–161 (AIIIFLTGFWFLDVANNTLQG). Topologically, residues 162 to 179 (PCRAFLADLAAGDAKKTR) are cytoplasmic. Residues 180-200 (VANACFSFFMAVGNVLGYAAG) traverse the membrane as a helical segment. Topologically, residues 201-225 (SYTNLHKMFPFTMTKACDIYCANLK) are extracellular. A helical transmembrane segment spans residues 226 to 246 (TCFFLSITLLLIVTFSSLWYV). Topologically, residues 247–281 (KDKQWSPPQGDKEEKTSSLFFFGEIFGAVRHMKRP) are cytoplasmic. The helical transmembrane segment at 282–302 (MVMLLIVTVINWIAWFPFILY) threads the bilayer. Residues 303 to 333 (DTDWMGREVYGGNSDGDERSKKLYDQGVQAG) are Extracellular-facing. A helical transmembrane segment spans residues 334 to 354 (ALGLMFNSILLGFVSLGVESI). The Cytoplasmic segment spans residues 355 to 363 (GRKMGGAKR). The chain crosses the membrane as a helical span at residues 364–384 (LWGCVNFILAIGLAMTVLVTK). Topologically, residues 385-406 (SAEHHREIAGPLAGPSSGIKAG) are extracellular. The chain crosses the membrane as a helical span at residues 407-427 (VFSLFTVLGIPLAITYSIPFA). At 428–440 (LASIFSTNSGAGQ) the chain is on the cytoplasmic side. Residues 441 to 461 (GLSLGVLNIAICIPQMIVSFS) traverse the membrane as a helical segment. Residues 462 to 473 (SGPLDAQFGGGN) lie on the Extracellular side of the membrane. The helical transmembrane segment at 474–494 (LPSFVVGAIAAAVSGVLALTV) threads the bilayer. Residues 495–512 (LPSPPPDAPAMSGAMGFH) are Cytoplasmic-facing.

The protein belongs to the glycoside-pentoside-hexuronide (GPH) cation symporter transporter (TC 2.A.2.4) family. In terms of tissue distribution, widely expressed. Expressed in the endosperm and on the epidermis of the outer surface of the cotyledons of torpedo-stage or older embryos.

The protein localises to the cell membrane. The enzyme catalyses sucrose(out) + H(+)(out) = sucrose(in) + H(+)(in). The protein operates within glycan biosynthesis; sucrose metabolism. With respect to regulation, inhibited by protonophores (e.g. carbonyl cyanide m-chlorophenyl-hydrazone (CCCP)) and SH group inhibitors (e.g. p-chloromercuribenzene sulphonic acid (PCMBS)). Responsible in a heterologous system for the transport of sucrose into the cell, with the concomitant uptake of protons (symport system). Can also transport biotin, and probably maltose at a lesser rate. In planta, the role of SUC5 for the transport of sucrose seems to be negligible. Plays a role in the nutrition of the filial tissues during early seed development and is probably involved in the import of biotin into the endosperm and the embryo epidermis. The sequence is that of Sucrose transport protein SUC5 from Arabidopsis thaliana (Mouse-ear cress).